A 383-amino-acid polypeptide reads, in one-letter code: Probable sphingolipid long chain base-responsive protein pil2 (383 aa).

S162 is modified (phosphoserine). Disordered regions lie at residues 292-336 and 356-383; these read PRTD…EDYQ and GEED…PIAA. The span at 311–324 shows a compositional bias: low complexity; sequence TTSGTTHSYTSTGS. Composition is skewed to polar residues over residues 325-336 and 368-383; these read KRYSQMGTEDYQ and VAET…PIAA.

In terms of processing, phosphorylated by ksg1 and ppk21. Phosphorylation is regulated by sphingolipid long chain bases (LCBs).

In terms of biological role, negative regulator of cell wall integrity (CWI) in unstressed cells, probably by inhibiting protein kinase ksg1/ppk21 activity and regulating their downstream CWI pathways pck2-MAP kinase pathway and protein kinase gad8 pathway. Activity may be regulated by the transient increase of sphingolipid long chain bases (LCBs) during heat stress. The chain is Probable sphingolipid long chain base-responsive protein pil2 (pil2) from Schizosaccharomyces pombe (strain 972 / ATCC 24843) (Fission yeast).